Consider the following 793-residue polypeptide: Splicing factor 3A subunit 1 (793 aa).

The interval Met1–Ile43 is disordered. Over residues Ala8 to Pro19 the composition is skewed to pro residues. Residue Lys20 forms a Glycyl lysine isopeptide (Lys-Gly) (interchain with G-Cter in SUMO2) linkage. A compositionally biased stretch (basic and acidic residues) spans Gln21–Ala34. Residues Ile52–Tyr94 form an SURP motif 1 repeat. An N6-acetyllysine modification is found at Lys55. Lys131 is covalently cross-linked (Glycyl lysine isopeptide (Lys-Gly) (interchain with G-Cter in SUMO2)). The SURP motif 2 repeat unit spans residues Val166 to Phe208. The segment at Gly318–His428 is disordered. A phosphoserine mark is found at Ser320, Ser329, and Ser359. Composition is skewed to acidic residues over residues Ser320–Asp334 and Asp354–Glu364. Pro residues predominate over residues Val368–Pro384. Over residues Ile388–Ala397 the composition is skewed to basic and acidic residues. Ser413 carries the phosphoserine modification. A Glycyl lysine isopeptide (Lys-Gly) (interchain with G-Cter in SUMO2) cross-link involves residue Lys424. Residue Ser451 is modified to Phosphoserine. Tyr456 bears the Phosphotyrosine mark. The span at Ile488 to Trp502 shows a compositional bias: basic and acidic residues. Disordered regions lie at residues Ile488 to Ala518, His530 to Pro584, and Ala665 to Glu688. Residue Lys499 forms a Glycyl lysine isopeptide (Lys-Gly) (interchain with G-Cter in SUMO2) linkage. Ser508 carries the post-translational modification Phosphoserine. Polar residues predominate over residues Met509–Ala518. Lys542 participates in a covalent cross-link: Glycyl lysine isopeptide (Lys-Gly) (interchain with G-Cter in SUMO2). Residues Ala665–Pro675 show a composition bias toward pro residues. Positions Pro680–Lys702 are required and sufficient for nuclear import. A Glycyl lysine isopeptide (Lys-Gly) (interchain with G-Cter in SUMO2) cross-link involves residue Lys686. Positions Ile707–Lys793 constitute a Ubiquitin-like domain. A Phosphotyrosine modification is found at Tyr759.

Component of the 17S U2 SnRNP complex, a ribonucleoprotein complex that contains small nuclear RNA (snRNA) U2 and a number of specific proteins. Part of the SF3A subcomplex of the 17S U2 SnRNP complex which is composed of three subunits; SF3A3/SAP61, SF3A2/SAP62 and SF3A1/SAP114. SF3A associates with the splicing factor SF3B and a 12S RNA unit to form the mature 17S U2 small nuclear ribonucleoprotein complex (17S U2 snRNP). SF3A1 functions as a scaffold that interacts directly with both SF3A2 and SF3A3. Identified in the spliceosome 'E' complex, a precursor of the spliceosome 'A' complex. Identified in the spliceosome 'A' and 'B' complexes. Identified in the spliceosome 'C' complex. Interacts with P2RX6; resulting in a reduction of the splicing activity. In terms of tissue distribution, ubiquitously expressed.

It is found in the nucleus. It localises to the nucleus speckle. Functionally, component of the 17S U2 SnRNP complex of the spliceosome, a large ribonucleoprotein complex that removes introns from transcribed pre-mRNAs. The 17S U2 SnRNP complex (1) directly participates in early spliceosome assembly and (2) mediates recognition of the intron branch site during pre-mRNA splicing by promoting the selection of the pre-mRNA branch-site adenosine, the nucleophile for the first step of splicing. Within the 17S U2 SnRNP complex, SF3A1 is part of the SF3A subcomplex that contributes to the assembly of the 17S U2 snRNP, and the subsequent assembly of the pre-spliceosome 'E' complex and the pre-catalytic spliceosome 'A' complex. Involved in pre-mRNA splicing as a component of pre-catalytic spliceosome 'B' complexes. In Homo sapiens (Human), this protein is Splicing factor 3A subunit 1 (SF3A1).